The following is a 185-amino-acid chain: Large ribosomal subunit protein bL25 (185 aa).

The protein belongs to the bacterial ribosomal protein bL25 family. CTC subfamily. In terms of assembly, part of the 50S ribosomal subunit; part of the 5S rRNA/L5/L18/L25 subcomplex. Contacts the 5S rRNA. Binds to the 5S rRNA independently of L5 and L18.

In terms of biological role, this is one of the proteins that binds to the 5S RNA in the ribosome where it forms part of the central protuberance. This chain is Large ribosomal subunit protein bL25, found in Laribacter hongkongensis (strain HLHK9).